A 396-amino-acid chain; its full sequence is S-adenosylmethionine synthase (396 aa).

His16 serves as a coordination point for ATP. Asp18 is a Mg(2+) binding site. Glu44 is a binding site for K(+). 2 residues coordinate L-methionine: Glu57 and Gln100. The interval 100-110 is flexible loop; the sequence is QSVDIAQGVDR. ATP contacts are provided by residues 165–167, Asp240, 246–247, Ala263, and Lys267; these read DAK and RK. Residue Asp240 coordinates L-methionine. L-methionine is bound at residue Lys271.

This sequence belongs to the AdoMet synthase family. Homotetramer; dimer of dimers. Requires Mg(2+) as cofactor. K(+) serves as cofactor.

The protein resides in the cytoplasm. It carries out the reaction L-methionine + ATP + H2O = S-adenosyl-L-methionine + phosphate + diphosphate. It functions in the pathway amino-acid biosynthesis; S-adenosyl-L-methionine biosynthesis; S-adenosyl-L-methionine from L-methionine: step 1/1. Functionally, catalyzes the formation of S-adenosylmethionine (AdoMet) from methionine and ATP. The overall synthetic reaction is composed of two sequential steps, AdoMet formation and the subsequent tripolyphosphate hydrolysis which occurs prior to release of AdoMet from the enzyme. This Pseudomonas entomophila (strain L48) protein is S-adenosylmethionine synthase.